The following is a 119-amino-acid chain: DNA-binding protein TubR (119 aa).

As to quaternary structure, homodimer. Binds to TubZ filaments via the C-terminus of TubZ. DNA is not required for binding to TubZ.

In terms of biological role, a DNA-binding protein that is part of the type III plasmid partition system used to ensure correct segregation of the pBc10987 plasmid. Binds TubZ filaments but does not influence the GTPase activity of TubZ with or without DNA. Cooperatively binds to multiple regions in tubC (centromere-like site) upstream of its own gene with consensus sequence N(T/A)ATTNC(C/G)GNAAT(A/T)N; probably forms an extended DNA-protein filament. Binds sites in its own promoter region and presumably represses its expression; its effect on RNA expression has not been shown. Does not specifically bind to the putative origin of replication on pBc10987. This chain is DNA-binding protein TubR, found in Bacillus cereus (strain ATCC 10987 / NRS 248).